The chain runs to 134 residues: Small ribosomal subunit protein bS6 (134 aa).

A disordered region spans residues 99 to 134 (EPSAMMQKRDRDERKDRERGRRRDEDGFSGDRNEEN). The segment covering 105–134 (QKRDRDERKDRERGRRRDEDGFSGDRNEEN) has biased composition (basic and acidic residues).

This sequence belongs to the bacterial ribosomal protein bS6 family.

Functionally, binds together with bS18 to 16S ribosomal RNA. This Methylobacterium nodulans (strain LMG 21967 / CNCM I-2342 / ORS 2060) protein is Small ribosomal subunit protein bS6.